We begin with the raw amino-acid sequence, 430 residues long: Trigger factor (430 aa).

One can recognise a PPIase FKBP-type domain in the interval 164 to 249 (DDWAVIDHEG…LKALKTRQLP (86 aa)).

The protein belongs to the FKBP-type PPIase family. Tig subfamily.

It localises to the cytoplasm. It carries out the reaction [protein]-peptidylproline (omega=180) = [protein]-peptidylproline (omega=0). In terms of biological role, involved in protein export. Acts as a chaperone by maintaining the newly synthesized protein in an open conformation. Functions as a peptidyl-prolyl cis-trans isomerase. This Anaeromyxobacter sp. (strain Fw109-5) protein is Trigger factor.